The primary structure comprises 338 residues: GTPase Obg (338 aa).

The 159-residue stretch at 1–159 folds into the Obg domain; sequence MQFIDEVKIH…RWLRLELKLM (159 aa). Residues 66–91 form a disordered region; the sequence is KAGRGKNGMGKDRHGANGDDLTIPVP. Residues 160 to 331 enclose the OBG-type G domain; sequence ADVGLLGFPN…LLDEIARHLW (172 aa). GTP contacts are provided by residues 166–173, 191–195, 213–216, 283–286, and 312–314; these read GFPNVGKS, FTTIK, DIPG, NKID, and SAA. Mg(2+) contacts are provided by serine 173 and threonine 193.

It belongs to the TRAFAC class OBG-HflX-like GTPase superfamily. OBG GTPase family. Monomer. Requires Mg(2+) as cofactor.

The protein localises to the cytoplasm. Functionally, an essential GTPase which binds GTP, GDP and possibly (p)ppGpp with moderate affinity, with high nucleotide exchange rates and a fairly low GTP hydrolysis rate. Plays a role in control of the cell cycle, stress response, ribosome biogenesis and in those bacteria that undergo differentiation, in morphogenesis control. The polypeptide is GTPase Obg (Geobacter metallireducens (strain ATCC 53774 / DSM 7210 / GS-15)).